We begin with the raw amino-acid sequence, 490 residues long: Mitochondria-eating protein (490 aa).

Positions 112–210 form a coiled coil; the sequence is IRELSSVHES…RILRDEVSFL (99 aa). Low complexity-rich tracts occupy residues 224–241 and 456–490; these read SRSP…SPVR and RSSS…SSRL. 2 disordered regions span residues 224–253 and 455–490; these read SRSP…LTSS and SRSS…SSRL.

It belongs to the MIEAP family.

The protein localises to the cytoplasm. Its subcellular location is the mitochondrion outer membrane. It is found in the mitochondrion matrix. In terms of biological role, key regulator of mitochondrial quality that mediates the repairing or degradation of unhealthy mitochondria in response to mitochondrial damage. Mediator of mitochondrial protein catabolic process (also named MALM) by mediating the degradation of damaged proteins inside mitochondria by promoting the accumulation in the mitochondrial matrix of hydrolases that are characteristic of the lysosomal lumen. Also involved in mitochondrion degradation of damaged mitochondria by promoting the formation of vacuole-like structures (named MIV), which engulf and degrade unhealthy mitochondria by accumulating lysosomes. Binds cardiolipin. May form molecular condensates (non-membrane-bounded organelles) within mitochondria that compartmentalize and promote cardiolipin metabolism. The chain is Mitochondria-eating protein (spata18) from Danio rerio (Zebrafish).